The primary structure comprises 228 residues: Urease accessory protein UreF (228 aa).

It belongs to the UreF family. UreD, UreF and UreG form a complex that acts as a GTP-hydrolysis-dependent molecular chaperone, activating the urease apoprotein by helping to assemble the nickel containing metallocenter of UreC. The UreE protein probably delivers the nickel.

It is found in the cytoplasm. Required for maturation of urease via the functional incorporation of the urease nickel metallocenter. This is Urease accessory protein UreF from Prochlorococcus marinus (strain MIT 9301).